The sequence spans 182 residues: Adenylate kinase (182 aa).

G12–T17 provides a ligand contact to ATP. An NMP region spans residues S32–V61. AMP-binding positions include T33, R38, E59 to V61, G85 to R88, and Q92. The segment at A126–D132 is LID. R127 serves as a coordination point for ATP. Residues R129 and R140 each contribute to the AMP site. G168 contacts ATP.

Belongs to the adenylate kinase family. Monomer.

Its subcellular location is the cytoplasm. The catalysed reaction is AMP + ATP = 2 ADP. The protein operates within purine metabolism; AMP biosynthesis via salvage pathway; AMP from ADP: step 1/1. In terms of biological role, catalyzes the reversible transfer of the terminal phosphate group between ATP and AMP. Plays an important role in cellular energy homeostasis and in adenine nucleotide metabolism. In Synechococcus sp. (strain RCC307), this protein is Adenylate kinase.